A 596-amino-acid polypeptide reads, in one-letter code: Fructan 1-exohydrolase w2 (596 aa).

An N-terminal signal peptide occupies residues 1-20; it reads MAQAWAFLLPVLVLGSYVTS. Aspartate 75 is a catalytic residue. N-linked (GlcNAc...) asparagine glycosylation is found at asparagine 168, asparagine 236, and asparagine 248. Cysteine 446 and cysteine 492 form a disulfide bridge. Asparagine 567 carries an N-linked (GlcNAc...) asparagine glycan.

This sequence belongs to the glycosyl hydrolase 32 family.

It carries out the reaction Hydrolysis of terminal, non-reducing (2-&gt;1)-linked beta-D-fructofuranose residues in fructans.. Its activity is regulated as follows. Inhibited by sucrose. In terms of biological role, hydrolyzes inulin-type beta-(2,1)-fructans, but not beta-(2,1)-linkages in branched fructans. Has low activity against beta-(2,6)-linked fructans. May play a role as a beta-(2,1)-trimmer during graminan biosynthesis. This is Fructan 1-exohydrolase w2 from Triticum aestivum (Wheat).